A 245-amino-acid polypeptide reads, in one-letter code: tRNA pseudouridine synthase A 2 (245 aa).

Asp-53 (nucleophile) is an active-site residue. Residue Tyr-111 coordinates substrate.

This sequence belongs to the tRNA pseudouridine synthase TruA family. In terms of assembly, homodimer.

The enzyme catalyses uridine(38/39/40) in tRNA = pseudouridine(38/39/40) in tRNA. Its function is as follows. Formation of pseudouridine at positions 38, 39 and 40 in the anticodon stem and loop of transfer RNAs. This chain is tRNA pseudouridine synthase A 2, found in Bacillus cereus (strain ATCC 10987 / NRS 248).